A 205-amino-acid polypeptide reads, in one-letter code: High frequency lysogenization protein HflD homolog (205 aa).

This sequence belongs to the HflD family.

Its subcellular location is the cytoplasm. The protein resides in the cell inner membrane. This chain is High frequency lysogenization protein HflD homolog, found in Shewanella baltica (strain OS223).